The chain runs to 1241 residues: High-affinity potassium transport protein (1241 aa).

2 helical membrane passes run 49–70 and 78–98; these read NFIAVHYFYTIVLTLITSILLY and IDALFLAAGAVTQGGLNTVDV. A glycan (N-linked (GlcNAc...) asparagine) is linked at asparagine 100. Residues 107 to 127 traverse the membrane as a helical segment; it reads IILYIICCISTPIAVHSCLAF. Disordered regions lie at residues 162–241, 253–316, and 329–570; these read TART…SLDD, KYHG…TPED, and EGTA…QLQQ. Polar residues predominate over residues 164-177; it reads RTMTKSKTGGTQRV. Basic and acidic residues-rich tracts occupy residues 181 to 191 and 199 to 214; these read GKSDKRDDFQE and VNRDEQDSVHSSHNSR. Over residues 215–238 the composition is skewed to low complexity; it reads DSNSNANTNSSNNNSINHNGSSGS. Asparagine 223, asparagine 227, asparagine 233, asparagine 257, asparagine 274, asparagine 353, and asparagine 364 each carry an N-linked (GlcNAc...) asparagine glycan. 2 stretches are compositionally biased toward polar residues: residues 268–280 and 345–365; these read NTATDENISQKLK and TDGTRNMDNGSESKSAPTMNE. Basic and acidic residues predominate over residues 366–375; the sequence is SKIRIQDKGA. Residues 380–411 show a composition bias toward polar residues; it reads DQDSVLHSSNSSACTSDEDSLPTNFGGTTPSL. N-linked (GlcNAc...) asparagine glycans are attached at residues asparagine 389 and asparagine 442. Basic residues-rich tracts occupy residues 446-455 and 482-497; these read PPRKASKSKR and HLPKARRIRQQIKRRL. Residues 498-509 are compositionally biased toward polar residues; sequence STGSIDKNSSSD. N-linked (GlcNAc...) asparagine glycans are attached at residues asparagine 505 and asparagine 538. Acidic residues predominate over residues 520–545; sequence NDDDDGNEGDNMEEYFADNESGDEDD. A compositionally biased stretch (low complexity) spans 561-570; sequence KQQQQHQLQQ. N-linked (GlcNAc...) asparagine glycans are attached at residues asparagine 584, asparagine 660, asparagine 681, asparagine 691, and asparagine 741. Residues 677–714 form a disordered region; sequence NSHRNGSEDVSSDSNETTYPLNGNNDHSQNDANGYPTY. Residues 684–708 are compositionally biased toward polar residues; it reads EDVSSDSNETTYPLNGNNDHSQNDA. 5 consecutive transmembrane segments (helical) span residues 784–806, 819–840, 844–864, 868–888, and 904–924; these read ILVVYYVGWHIVSFVMLVPWINL, VSPTWWGFWTAMSAFNDLGLTL, SMMSFDKAVYPLIVMIWFIII, GFPILLRCIIWIMFKLSPDLS, and CFTLLFPKAATWWLLLTLVGL. An N-linked (GlcNAc...) asparagine glycan is attached at asparagine 925. A run of 2 helical transmembrane segments spans residues 929-949 and 977-997; these read WILFIILDFGSTVVKSLSKGY and SIQVSYMLMMYVSVLPLAISI. A disordered region spans residues 1011–1073; that stretch reads YGEMGGKPED…ENENPNEEST (63 aa). Residues 1021-1041 show a composition bias toward acidic residues; the sequence is TDTEEDGDCDDEDDDNEEEES. The span at 1050-1062 shows a compositional bias: basic residues; the sequence is GKSKKETKKKKKR. 2 consecutive transmembrane segments (helical) span residues 1084–1104 and 1117–1137; these read QLSFDLWFLFLGLFIICICER and VFTILFEIVSAYGTVGLSLGY. Asparagine 1141 carries N-linked (GlcNAc...) asparagine glycosylation. A disordered region spans residues 1222 to 1241; the sequence is DELKHKRSLSRSSKRSTKTN. The segment covering 1226-1241 has biased composition (basic residues); sequence HKRSLSRSSKRSTKTN.

It belongs to the TrkH potassium transport family.

The protein localises to the membrane. Functionally, this protein is required for high-affinity potassium transport. In Saccharomyces uvarum (Yeast), this protein is High-affinity potassium transport protein (TRK1).